Reading from the N-terminus, the 82-residue chain is RNA-binding protein GK0100 (82 aa).

The protein belongs to the eukaryotic ribosomal protein eL8 family.

In Geobacillus kaustophilus (strain HTA426), this protein is RNA-binding protein GK0100.